The primary structure comprises 178 residues: ATP synthase subunit b (178 aa).

A helical membrane pass occupies residues 11 to 31 (IIPEPVEIVVGLVAFLLLLFV).

This sequence belongs to the ATPase B chain family. F-type ATPases have 2 components, F(1) - the catalytic core - and F(0) - the membrane proton channel. F(1) has five subunits: alpha(3), beta(3), gamma(1), delta(1), epsilon(1). F(0) has three main subunits: a(1), b(2) and c(10-14). The alpha and beta chains form an alternating ring which encloses part of the gamma chain. F(1) is attached to F(0) by a central stalk formed by the gamma and epsilon chains, while a peripheral stalk is formed by the delta and b chains.

The protein resides in the cell membrane. Its function is as follows. F(1)F(0) ATP synthase produces ATP from ADP in the presence of a proton or sodium gradient. F-type ATPases consist of two structural domains, F(1) containing the extramembraneous catalytic core and F(0) containing the membrane proton channel, linked together by a central stalk and a peripheral stalk. During catalysis, ATP synthesis in the catalytic domain of F(1) is coupled via a rotary mechanism of the central stalk subunits to proton translocation. Functionally, component of the F(0) channel, it forms part of the peripheral stalk, linking F(1) to F(0). The chain is ATP synthase subunit b from Saccharopolyspora erythraea (strain ATCC 11635 / DSM 40517 / JCM 4748 / NBRC 13426 / NCIMB 8594 / NRRL 2338).